We begin with the raw amino-acid sequence, 78 residues long: UPF0349 protein SSP1836 (78 aa).

This sequence belongs to the UPF0349 family.

In Staphylococcus saprophyticus subsp. saprophyticus (strain ATCC 15305 / DSM 20229 / NCIMB 8711 / NCTC 7292 / S-41), this protein is UPF0349 protein SSP1836.